A 692-amino-acid chain; its full sequence is uncharacterized protein (692 aa).

Response regulatory domains follow at residues 9-130 and 139-255; these read RVLY…LRMC and RILI…EYRM. 4-aspartylphosphate is present on residues aspartate 58 and aspartate 188. Residues 299-432 enclose the GGDEF domain; sequence GVHGLVIIDV…GGNQAHVWSA (134 aa). The EAL domain maps to 443–691; that stretch reads ESVIKRLVST…SFDFQHMSHD (249 aa).

This is an uncharacterized protein from Thiocystis violacea.